A 969-amino-acid chain; its full sequence is UvrABC system protein A (969 aa).

32–39 (GLSGSGKS) contacts ATP. The C4-type zinc-finger motif lies at 258–286 (CPNGHPLAVDDLEPRSFSFNSPYGACPEC). ABC transporter domains follow at residues 316–599 (WSAG…KDSI) and 619–948 (VDRK…KFLA). 652 to 659 (GVSGSGKS) lines the ATP pocket. The segment at 751–777 (CEACTGDGTIKIEMNFLPDVYVPCEVC) adopts a C4-type zinc-finger fold.

Belongs to the ABC transporter superfamily. UvrA family. As to quaternary structure, forms a heterotetramer with UvrB during the search for lesions.

Its subcellular location is the cytoplasm. Functionally, the UvrABC repair system catalyzes the recognition and processing of DNA lesions. UvrA is an ATPase and a DNA-binding protein. A damage recognition complex composed of 2 UvrA and 2 UvrB subunits scans DNA for abnormalities. When the presence of a lesion has been verified by UvrB, the UvrA molecules dissociate. The protein is UvrABC system protein A of Mycobacterium leprae (strain TN).